Consider the following 258-residue polypeptide: Imidazole glycerol phosphate synthase subunit HisF (258 aa).

Active-site residues include Asp11 and Asp130.

Belongs to the HisA/HisF family. In terms of assembly, heterodimer of HisH and HisF.

It localises to the cytoplasm. The enzyme catalyses 5-[(5-phospho-1-deoxy-D-ribulos-1-ylimino)methylamino]-1-(5-phospho-beta-D-ribosyl)imidazole-4-carboxamide + L-glutamine = D-erythro-1-(imidazol-4-yl)glycerol 3-phosphate + 5-amino-1-(5-phospho-beta-D-ribosyl)imidazole-4-carboxamide + L-glutamate + H(+). It functions in the pathway amino-acid biosynthesis; L-histidine biosynthesis; L-histidine from 5-phospho-alpha-D-ribose 1-diphosphate: step 5/9. Its function is as follows. IGPS catalyzes the conversion of PRFAR and glutamine to IGP, AICAR and glutamate. The HisF subunit catalyzes the cyclization activity that produces IGP and AICAR from PRFAR using the ammonia provided by the HisH subunit. In Citrobacter koseri (strain ATCC BAA-895 / CDC 4225-83 / SGSC4696), this protein is Imidazole glycerol phosphate synthase subunit HisF.